The sequence spans 146 residues: Probable glycine cleavage system H protein 3 (146 aa).

The region spanning 29 to 111 (VVSVGMTDLG…PYGSWIIKVS (83 aa)) is the Lipoyl-binding domain. Position 71 is an N6-lipoyllysine (Lys-71).

This sequence belongs to the GcvH family. In terms of assembly, the glycine cleavage system is composed of four proteins: P, T, L and H. (R)-lipoate is required as a cofactor.

Its function is as follows. The glycine cleavage system catalyzes the degradation of glycine. The H protein shuttles the methylamine group of glycine from the P protein to the T protein. The protein is Probable glycine cleavage system H protein 3 of Sulfolobus acidocaldarius (strain ATCC 33909 / DSM 639 / JCM 8929 / NBRC 15157 / NCIMB 11770).